Here is a 317-residue protein sequence, read N- to C-terminus: Testis-expressed protein 19.2 (317 aa).

Acidic residues predominate over residues 64 to 75 (MELSEASSEPEE). The tract at residues 64–113 (MELSEASSEPEEWPGLSGGEGQGHLPHGISVSAGSGAQGPQPVPTELGPQ) is disordered. Residues 101–145 (QGPQPVPTELGPQEAVPLDLGPEDAEWTQALPWRFDGLSPCSHWL) form an important for interaction with piRNA region.

As to quaternary structure, interacts with UBR2. Interacts with piRNA-associated proteins DDX4, EDC4, MAEL, PIWIL1, PIWIL2, RANBP9 and TDRD6. As to expression, specifically expressed in somatic cells of male gonad lineage.

It localises to the cytoplasm. Its function is as follows. May be required during spermatogenesis, probably by participating in the repression of retrotransposable elements and prevent their mobilization. With its paralog, Tex19.1, collaborates with the Piwi-interacting RNA (piRNA) pathway, which mediates the repression of transposable elements during meiosis by forming complexes composed of piRNAs and Piwi proteins. Interacts with Piwi proteins and directly binds piRNAs, a class of 24 to 30 nucleotide RNAs that are generated by a Dicer-independent mechanism and are primarily derived from transposons and other repeated sequence elements. The chain is Testis-expressed protein 19.2 (Tex19.2) from Mus musculus (Mouse).